Reading from the N-terminus, the 200-residue chain is MARYTGPSWKLSRRLGISLSGTGKELEKRPYAPGPHGPGQRKKLSEYGLQLQEKQKLRHMYGVNERQFRNLFDKAAKMAGKHGENFMILLESRLDNIVYRLGLARTRRQARQLVNHGHVLVDGSRVDIPSYQVKPGQTISLREKSQNLSVVKEAVEVNNFVPEYLTFDAEKLEGSLTRLPERSELPAEINEALIVEFYSR.

The disordered stretch occupies residues 22–42 (TGKELEKRPYAPGPHGPGQRK). An S4 RNA-binding domain is found at 92–152 (SRLDNIVYRL…EKSQNLSVVK (61 aa)).

The protein belongs to the universal ribosomal protein uS4 family. In terms of assembly, part of the 30S ribosomal subunit. Contacts protein S5. The interaction surface between S4 and S5 is involved in control of translational fidelity.

In terms of biological role, one of the primary rRNA binding proteins, it binds directly to 16S rRNA where it nucleates assembly of the body of the 30S subunit. With S5 and S12 plays an important role in translational accuracy. In Bacillus licheniformis (strain ATCC 14580 / DSM 13 / JCM 2505 / CCUG 7422 / NBRC 12200 / NCIMB 9375 / NCTC 10341 / NRRL NRS-1264 / Gibson 46), this protein is Small ribosomal subunit protein uS4.